Reading from the N-terminus, the 623-residue chain is Chaperone protein HtpG (623 aa).

The tract at residues 1–341 (MEKREFKAES…SQDLSLNISR (341 aa)) is a; substrate-binding. Residues 342–549 (EMLQHDRQLS…EGEVSIEMEK (208 aa)) are b. Residues 550–623 (ILSAMPNNQG…FTNDICKLMK (74 aa)) form a c region.

Belongs to the heat shock protein 90 family. Homodimer.

It is found in the cytoplasm. Functionally, molecular chaperone. Has ATPase activity. In Clostridium perfringens (strain ATCC 13124 / DSM 756 / JCM 1290 / NCIMB 6125 / NCTC 8237 / Type A), this protein is Chaperone protein HtpG.